A 461-amino-acid chain; its full sequence is uncharacterized protein (461 aa).

A compositionally biased stretch (basic and acidic residues) spans 1–19; the sequence is MEKCSHESGRHSAENDGKY. The tract at residues 1 to 21 is disordered; sequence MEKCSHESGRHSAENDGKYDI.

It belongs to the CapA family.

Could be involved in the biosynthesis of a cell wall component. This is an uncharacterized protein from Sinorhizobium fredii (strain NBRC 101917 / NGR234).